Here is a 324-residue protein sequence, read N- to C-terminus: tRNA-dihydrouridine(20a/20b) synthase [NAD(P)+]-like (324 aa).

FMN contacts are provided by residues 33–35 (PMV) and Gln87. The Proton donor role is filled by Cys116. Residues Lys158, His186, 216–218 (NGD), and 240–241 (AR) contribute to the FMN site.

Belongs to the Dus family. Dus4 subfamily. It depends on FMN as a cofactor.

The enzyme catalyses 5,6-dihydrouridine(20a) in tRNA + NADP(+) = uridine(20a) in tRNA + NADPH + H(+). It catalyses the reaction 5,6-dihydrouridine(20a) in tRNA + NAD(+) = uridine(20a) in tRNA + NADH + H(+). The catalysed reaction is 5,6-dihydrouridine(20b) in tRNA + NAD(+) = uridine(20b) in tRNA + NADH + H(+). It carries out the reaction 5,6-dihydrouridine(20b) in tRNA + NADP(+) = uridine(20b) in tRNA + NADPH + H(+). Functionally, catalyzes the synthesis of dihydrouridine, a modified base found in the D-loop of most tRNAs. The chain is tRNA-dihydrouridine(20a/20b) synthase [NAD(P)+]-like (Dus4l) from Mus musculus (Mouse).